Reading from the N-terminus, the 908-residue chain is Protein translocase subunit SecA (908 aa).

ATP is bound by residues Gln-87, 105 to 109 (GEGKT), and Asp-507. The disordered stretch occupies residues 860-898 (EALGNAEESDEASDQSVKTFERAGAKVGRNDPCPCGSGK). Cys-892, Cys-894, Cys-903, and His-904 together coordinate Zn(2+).

The protein belongs to the SecA family. Monomer and homodimer. Part of the essential Sec protein translocation apparatus which comprises SecA, SecYEG and auxiliary proteins SecDF-YajC and YidC. The cofactor is Zn(2+).

Its subcellular location is the cell inner membrane. The protein resides in the cytoplasm. It catalyses the reaction ATP + H2O + cellular proteinSide 1 = ADP + phosphate + cellular proteinSide 2.. Functionally, part of the Sec protein translocase complex. Interacts with the SecYEG preprotein conducting channel. Has a central role in coupling the hydrolysis of ATP to the transfer of proteins into and across the cell membrane, serving both as a receptor for the preprotein-SecB complex and as an ATP-driven molecular motor driving the stepwise translocation of polypeptide chains across the membrane. The protein is Protein translocase subunit SecA of Methylobacillus flagellatus (strain ATCC 51484 / DSM 6875 / VKM B-1610 / KT).